A 505-amino-acid polypeptide reads, in one-letter code: ATP synthase subunit alpha (505 aa).

170–177 serves as a coordination point for ATP; it reads GDRQTGKS.

Belongs to the ATPase alpha/beta chains family. As to quaternary structure, F-type ATPases have 2 components, CF(1) - the catalytic core - and CF(0) - the membrane proton channel. CF(1) has five subunits: alpha(3), beta(3), gamma(1), delta(1), epsilon(1). CF(0) has four main subunits: a(1), b(1), b'(1) and c(9-12).

Its subcellular location is the cellular thylakoid membrane. It carries out the reaction ATP + H2O + 4 H(+)(in) = ADP + phosphate + 5 H(+)(out). In terms of biological role, produces ATP from ADP in the presence of a proton gradient across the membrane. The alpha chain is a regulatory subunit. This Prochlorococcus marinus (strain MIT 9312) protein is ATP synthase subunit alpha.